Consider the following 146-residue polypeptide: Flagellar assembly factor FliW 1 (146 aa).

The protein belongs to the FliW family. In terms of assembly, interacts with translational regulator CsrA and flagellin(s).

The protein resides in the cytoplasm. Acts as an anti-CsrA protein, binds CsrA and prevents it from repressing translation of its target genes, one of which is flagellin. Binds to flagellin and participates in the assembly of the flagellum. This chain is Flagellar assembly factor FliW 1, found in Helicobacter hepaticus (strain ATCC 51449 / 3B1).